We begin with the raw amino-acid sequence, 618 residues long: UvrABC system protein C (618 aa).

The GIY-YIG domain maps to 19 to 97 (SEPGIYRMLD…IKALRPKYNV (79 aa)). The region spanning 208–243 (QIILDELAERMKNAVSQLNFEEAAVLRDQIKNLRLI) is the UVR domain.

This sequence belongs to the UvrC family. Interacts with UvrB in an incision complex.

The protein resides in the cytoplasm. Its function is as follows. The UvrABC repair system catalyzes the recognition and processing of DNA lesions. UvrC both incises the 5' and 3' sides of the lesion. The N-terminal half is responsible for the 3' incision and the C-terminal half is responsible for the 5' incision. This Legionella pneumophila (strain Lens) protein is UvrABC system protein C.